The chain runs to 121 residues: Small ribosomal subunit protein uS13 (121 aa).

Positions 94 to 121 are disordered; it reads GLPMRGQRTRTNARTRKGPRKGAAALKK.

It belongs to the universal ribosomal protein uS13 family. In terms of assembly, part of the 30S ribosomal subunit. Forms a loose heterodimer with protein S19. Forms two bridges to the 50S subunit in the 70S ribosome.

Located at the top of the head of the 30S subunit, it contacts several helices of the 16S rRNA. In the 70S ribosome it contacts the 23S rRNA (bridge B1a) and protein L5 of the 50S subunit (bridge B1b), connecting the 2 subunits; these bridges are implicated in subunit movement. Contacts the tRNAs in the A and P-sites. This chain is Small ribosomal subunit protein uS13, found in Delftia acidovorans (strain DSM 14801 / SPH-1).